Here is a 463-residue protein sequence, read N- to C-terminus: A-type ATP synthase subunit B (463 aa).

It belongs to the ATPase alpha/beta chains family. In terms of assembly, has multiple subunits with at least A(3), B(3), C, D, E, F, H, I and proteolipid K(x).

The protein localises to the cell membrane. Component of the A-type ATP synthase that produces ATP from ADP in the presence of a proton gradient across the membrane. The B chain is a regulatory subunit. The protein is A-type ATP synthase subunit B of Methanothermobacter thermautotrophicus (strain ATCC 29096 / DSM 1053 / JCM 10044 / NBRC 100330 / Delta H) (Methanobacterium thermoautotrophicum).